Consider the following 167-residue polypeptide: uncharacterized protein (167 aa).

A coiled-coil region spans residues 70-118 (KIVELRKAMESIITELAYIKGELKGLQEKGESKVERKEIIEEKIQKAMV). Residues 128-155 (EKEERKPAKESKRREHDVIIPEGKKEER) show a composition bias toward basic and acidic residues. Residues 128-167 (EKEERKPAKESKRREHDVIIPEGKKEERTDDGEDGLIVCD) are disordered.

This is an uncharacterized protein from Archaeoglobus fulgidus (strain ATCC 49558 / DSM 4304 / JCM 9628 / NBRC 100126 / VC-16).